A 675-amino-acid polypeptide reads, in one-letter code: DNA ligase (675 aa).

NAD(+) contacts are provided by residues 34-38 (DYAFD), 83-84 (SL), and Glu-117. Lys-119 (N6-AMP-lysine intermediate) is an active-site residue. NAD(+)-binding residues include Arg-140, Glu-184, Lys-297, and Lys-321. Residues Cys-415, Cys-418, Cys-433, and Cys-439 each coordinate Zn(2+). A BRCT domain is found at 598-675 (LVNRNFEGMK…GEEEFEAMLF (78 aa)).

This sequence belongs to the NAD-dependent DNA ligase family. LigA subfamily. The cofactor is Mg(2+). Mn(2+) is required as a cofactor.

It catalyses the reaction NAD(+) + (deoxyribonucleotide)n-3'-hydroxyl + 5'-phospho-(deoxyribonucleotide)m = (deoxyribonucleotide)n+m + AMP + beta-nicotinamide D-nucleotide.. In terms of biological role, DNA ligase that catalyzes the formation of phosphodiester linkages between 5'-phosphoryl and 3'-hydroxyl groups in double-stranded DNA using NAD as a coenzyme and as the energy source for the reaction. It is essential for DNA replication and repair of damaged DNA. The polypeptide is DNA ligase (Prosthecochloris aestuarii (strain DSM 271 / SK 413)).